The following is a 291-amino-acid chain: Elongation factor Ts (291 aa).

An involved in Mg(2+) ion dislocation from EF-Tu region spans residues 79-82 (TDFV).

It belongs to the EF-Ts family.

It is found in the cytoplasm. Associates with the EF-Tu.GDP complex and induces the exchange of GDP to GTP. It remains bound to the aminoacyl-tRNA.EF-Tu.GTP complex up to the GTP hydrolysis stage on the ribosome. The polypeptide is Elongation factor Ts (Ruegeria pomeroyi (strain ATCC 700808 / DSM 15171 / DSS-3) (Silicibacter pomeroyi)).